The primary structure comprises 148 residues: Ribosome-binding factor A (148 aa).

The tract at residues 120-148 is disordered; it reads AKAREGASYAGDADPYRTAEPDADDAPRA. Residues 133-148 show a composition bias toward basic and acidic residues; the sequence is DPYRTAEPDADDAPRA.

It belongs to the RbfA family. As to quaternary structure, monomer. Binds 30S ribosomal subunits, but not 50S ribosomal subunits or 70S ribosomes.

The protein resides in the cytoplasm. One of several proteins that assist in the late maturation steps of the functional core of the 30S ribosomal subunit. Associates with free 30S ribosomal subunits (but not with 30S subunits that are part of 70S ribosomes or polysomes). Required for efficient processing of 16S rRNA. May interact with the 5'-terminal helix region of 16S rRNA. The protein is Ribosome-binding factor A of Micrococcus luteus (strain ATCC 4698 / DSM 20030 / JCM 1464 / CCM 169 / CCUG 5858 / IAM 1056 / NBRC 3333 / NCIMB 9278 / NCTC 2665 / VKM Ac-2230) (Micrococcus lysodeikticus).